Reading from the N-terminus, the 580-residue chain is WD repeat-containing protein 46 (580 aa).

The interval 34–108 (SWKEYKKMKQ…QQEKMKVTKD (75 aa)) is disordered. 2 stretches are compositionally biased toward basic and acidic residues: residues 64-85 (TEGRAKKPKVLTKEQLERHDTG) and 98-108 (LQQEKMKVTKD). WD repeat units lie at residues 193–234 (AALD…YTYV), 235–272 (YDNLGTELHCLKTMYDTARLEFLPHHFLLVGSSRNSFL), 274–312 (YVDVSVGKQVASFATKSGTLDVMCQNPANAIIHTGHTNG), 315–354 (SLWSPNSKEPLVKILTHLSAVKGIAVDDQGNYMATTGLDR), 357–396 (RIWDVRMFRQLHAYSLPFGVSNVAISQKMNVACAVGNHVQ), and 399–436 (RGMHNGTCKEPYLVHNCGGVVTDLRFVPWEDVLGIGHA).

In terms of assembly, part of the small subunit (SSU) processome.

The protein localises to the nucleus. It localises to the nucleolus. In terms of biological role, scaffold component of the nucleolar structure. Part of the small subunit (SSU) processome, first precursor of the small eukaryotic ribosomal subunit. Required for 18S rRNA processing. Plays a role in negative regulation of detoxification genes by inhibiting protein levels of transcription factor skn-1, leading to down-regulation of skn-1 target genes. In Caenorhabditis elegans, this protein is WD repeat-containing protein 46.